Consider the following 406-residue polypeptide: MRVAYVDPFSGASGDMLLGALVDAGVPPEELADRLASALDVDGYRLVVERVVRRGLAGTQVRVIVEAAQPARDWAEIRDLLSASALPPRVKERALAVFRRLAEAEASVHSVPLESVHFHEVGAVDSIVDVVGVVWGFELLGVEEITCGPLPLSRGWVETAHGRLPVPAPATALLLAQAGAPLVPLDIEAELVTPTGAALLVELARFVRPAFLPERVGYGFGTRELPWPNALRLWIGEAFAVPSRLDEAELLLEANLDDMNPQFIEPLVDQLFAAGALDVYLTPIVMKRSRPAVIVSAICRAKDRPVLERVLFEHSTTFGVRGIPIERTKLARRSVAVATRWGEVAVKLKIVQDRIVDAVPEYRDCLAIHQRTGLPIREIWNEAARLAAVWIGQRVGEEDQEATLPE.

Belongs to the LarC family.

In Thermomicrobium roseum (strain ATCC 27502 / DSM 5159 / P-2), this protein is Putative nickel insertion protein.